We begin with the raw amino-acid sequence, 101 residues long: Urease subunit beta (101 aa).

Belongs to the urease beta subunit family. As to quaternary structure, heterotrimer of UreA (gamma), UreB (beta) and UreC (alpha) subunits. Three heterotrimers associate to form the active enzyme.

It localises to the cytoplasm. It catalyses the reaction urea + 2 H2O + H(+) = hydrogencarbonate + 2 NH4(+). Its pathway is nitrogen metabolism; urea degradation; CO(2) and NH(3) from urea (urease route): step 1/1. This is Urease subunit beta from Burkholderia ambifaria (strain MC40-6).